The sequence spans 96 residues: DNA-directed RNA polymerase subunit Rpo11 (96 aa).

It belongs to the archaeal Rpo11/eukaryotic RPB11/RPC19 RNA polymerase subunit family. In terms of assembly, part of the RNA polymerase complex.

The protein localises to the cytoplasm. The enzyme catalyses RNA(n) + a ribonucleoside 5'-triphosphate = RNA(n+1) + diphosphate. Its function is as follows. DNA-dependent RNA polymerase (RNAP) catalyzes the transcription of DNA into RNA using the four ribonucleoside triphosphates as substrates. The chain is DNA-directed RNA polymerase subunit Rpo11 from Methanococcus maripaludis (strain DSM 14266 / JCM 13030 / NBRC 101832 / S2 / LL).